The primary structure comprises 125 residues: Large ribosomal subunit protein bL12 (125 aa).

This sequence belongs to the bacterial ribosomal protein bL12 family. Homodimer. Part of the ribosomal stalk of the 50S ribosomal subunit. Forms a multimeric L10(L12)X complex, where L10 forms an elongated spine to which 2 to 4 L12 dimers bind in a sequential fashion. Binds GTP-bound translation factors.

Its function is as follows. Forms part of the ribosomal stalk which helps the ribosome interact with GTP-bound translation factors. Is thus essential for accurate translation. The chain is Large ribosomal subunit protein bL12 from Helicobacter pylori (strain P12).